The sequence spans 252 residues: Deoxyuridine 5'-triphosphate nucleotidohydrolase, mitochondrial (252 aa).

Residues 1–69 constitute a mitochondrion transit peptide; sequence MTPLCPRPAL…AGRLSQGCRG (69 aa). Residues Cys-11, Ser-88, and Ser-99 each carry the phosphoserine modification. The interval 78–104 is disordered; it reads WKGELPKAGGSPAPGPETPAISPSKRA. Residues 173–175, 187–193, Gly-198, Arg-241, and 246–247 contribute to the dUTP site; these read RSG, GVIDEDY, and FG.

It belongs to the dUTPase family. Homotrimer. It depends on Mg(2+) as a cofactor. Post-translationally, nuclear isoform 2 is phosphorylated in vivo on Ser-11, a reaction that can be catalyzed in vitro by CDC2. Phosphorylation in mature T-cells occurs in a cell cycle-dependent manner. Isoform 3 is not phosphorylated. As to expression, found in a variety of tissues. Isoform 3 expression is constitutive, while isoform 2 expression correlates with the onset of DNA replication (at protein level). Isoform 2 degradation coincides with the cessation of nuclear DNA replication (at protein level).

Its subcellular location is the nucleus. The protein resides in the mitochondrion. It catalyses the reaction dUTP + H2O = dUMP + diphosphate + H(+). Its pathway is pyrimidine metabolism; dUMP biosynthesis; dUMP from dCTP (dUTP route): step 2/2. With respect to regulation, phosphorylation is necessary for activity. In terms of biological role, catalyzes the cleavage of 2'-deoxyuridine 5'-triphosphate (dUTP) into 2'-deoxyuridine 5'-monophosphate (dUMP) and inorganic pyrophosphate and through its action efficiently prevents uracil misincorporation into DNA and at the same time provides dUMP, the substrate for de novo thymidylate biosynthesis. Inhibits peroxisome proliferator-activated receptor (PPAR) activity by binding of its N-terminal to PPAR, preventing the latter's dimerization with retinoid X receptor. Essential for embryonic development. The polypeptide is Deoxyuridine 5'-triphosphate nucleotidohydrolase, mitochondrial (DUT) (Homo sapiens (Human)).